We begin with the raw amino-acid sequence, 154 residues long: Toxin YhaV (154 aa).

Homohexamer; forms a complex with PrlF (SohA) with stoichiometry PrlF(2)-YhaV(4), possibly as a YhaV(2)-PrlF(2)-YhaV(2) complex like the MazFE complex. May dimerize in solution.

Toxic component of a type II toxin-antitoxin (TA) system. Has RNase activity in vitro. Acts as a transcription factor. The YhaV/PrlF complex binds the prlF-yhaV operon, probably negatively regulating its expression. This Escherichia coli O157:H7 protein is Toxin YhaV (yhaV).